The chain runs to 375 residues: 23S rRNA (uracil(747)-C(5))-methyltransferase RlmC (375 aa).

Residues cysteine 3, cysteine 11, cysteine 14, and cysteine 87 each contribute to the [4Fe-4S] cluster site. Residues glutamine 212, phenylalanine 241, glutamate 262, and asparagine 307 each contribute to the S-adenosyl-L-methionine site. Cysteine 334 (nucleophile) is an active-site residue.

The protein belongs to the class I-like SAM-binding methyltransferase superfamily. RNA M5U methyltransferase family. RlmC subfamily.

It carries out the reaction uridine(747) in 23S rRNA + S-adenosyl-L-methionine = 5-methyluridine(747) in 23S rRNA + S-adenosyl-L-homocysteine + H(+). In terms of biological role, catalyzes the formation of 5-methyl-uridine at position 747 (m5U747) in 23S rRNA. This Escherichia coli (strain SMS-3-5 / SECEC) protein is 23S rRNA (uracil(747)-C(5))-methyltransferase RlmC.